A 124-amino-acid polypeptide reads, in one-letter code: Fluoride-specific ion channel FluC (124 aa).

Helical transmembrane passes span 5–25 (ILAV…TGTW), 38–58 (TLAV…LFLL), 69–89 (GLIV…LDTL), and 99–119 (LALG…WAGL). Residues glycine 76 and threonine 79 each contribute to the Na(+) site.

The protein belongs to the fluoride channel Fluc/FEX (TC 1.A.43) family.

Its subcellular location is the cell inner membrane. The catalysed reaction is fluoride(in) = fluoride(out). Na(+) is not transported, but it plays an essential structural role and its presence is essential for fluoride channel function. Fluoride-specific ion channel. Important for reducing fluoride concentration in the cell, thus reducing its toxicity. The chain is Fluoride-specific ion channel FluC from Pseudomonas syringae pv. syringae (strain B728a).